Consider the following 128-residue polypeptide: Probable 4-amino-4-deoxy-L-arabinose-phosphoundecaprenol flippase subunit ArnF (128 aa).

Residues 1-2 (MG) are Cytoplasmic-facing. A helical transmembrane segment spans residues 3-23 (LMWGLFSVIIASVAQLSLGFA). Topologically, residues 24–35 (ASHLPPMTHLWD) are periplasmic. The helical transmembrane segment at 36–56 (FIAALLAFGLDARILLLGLLG) threads the bilayer. Residues 57-76 (YLLSVFCWYKTLHKLALSKA) are Cytoplasmic-facing. A helical membrane pass occupies residues 77-97 (YALLSMSYVLVWIASMVLPGW). The Periplasmic portion of the chain corresponds to 98-100 (EGT). Residues 101 to 121 (FSLKALLGVACIMSGLMLIFL) traverse the membrane as a helical segment. Residues 122–128 (PMTKQRY) are Cytoplasmic-facing.

The protein belongs to the ArnF family. In terms of assembly, heterodimer of ArnE and ArnF.

The protein resides in the cell inner membrane. The protein operates within bacterial outer membrane biogenesis; lipopolysaccharide biosynthesis. In terms of biological role, translocates 4-amino-4-deoxy-L-arabinose-phosphoundecaprenol (alpha-L-Ara4N-phosphoundecaprenol) from the cytoplasmic to the periplasmic side of the inner membrane. The sequence is that of Probable 4-amino-4-deoxy-L-arabinose-phosphoundecaprenol flippase subunit ArnF from Escherichia coli (strain 55989 / EAEC).